The sequence spans 102 residues: Small ribosomal subunit protein uS10 (102 aa).

This sequence belongs to the universal ribosomal protein uS10 family. As to quaternary structure, part of the 30S ribosomal subunit.

Functionally, involved in the binding of tRNA to the ribosomes. In Leuconostoc citreum (strain KM20), this protein is Small ribosomal subunit protein uS10.